We begin with the raw amino-acid sequence, 757 residues long: Xaa-Pro dipeptidyl-peptidase (757 aa).

Catalysis depends on charge relay system residues Ser348, Asp468, and His498.

The protein belongs to the peptidase S15 family. In terms of assembly, homodimer.

The protein resides in the cytoplasm. It catalyses the reaction Hydrolyzes Xaa-Pro-|- bonds to release unblocked, N-terminal dipeptides from substrates including Ala-Pro-|-p-nitroanilide and (sequentially) Tyr-Pro-|-Phe-Pro-|-Gly-Pro-|-Ile.. In terms of biological role, removes N-terminal dipeptides sequentially from polypeptides having unsubstituted N-termini provided that the penultimate residue is proline. In Streptococcus pneumoniae serotype 19F (strain G54), this protein is Xaa-Pro dipeptidyl-peptidase.